The primary structure comprises 404 residues: Major outer membrane porin (404 aa).

The signal sequence occupies residues 1-22 (MKKLLKSVLAFAVLGSASSLHA). A disordered region spans residues 85–110 (GPVPTTTDTDAAADITTSTPRENPAY). Positions 89 to 103 (TTTDTDAAADITTST) are enriched in low complexity.

This sequence belongs to the chlamydial porin (CP) (TC 1.B.2) family. As to quaternary structure, part of a disulfide cross-linked outer membrane complex (COMC) composed of the major outer membrane porin (MOMP), the small cysteine-rich protein (OmcA) and the large cysteine-rich periplasmic protein (OmcB).

The protein localises to the cell outer membrane. Its function is as follows. In elementary bodies (EBs, the infectious stage, which is able to survive outside the host cell) provides the structural integrity of the outer envelope through disulfide cross-links with the small cysteine-rich protein and the large cysteine-rich periplasmic protein. It has been described in publications as the Sarkosyl-insoluble COMC (Chlamydia outer membrane complex), and serves as the functional equivalent of peptidoglycan. In terms of biological role, permits diffusion of specific solutes through the outer membrane. In Chlamydia muridarum, this protein is Major outer membrane porin (ompA).